Reading from the N-terminus, the 1087-residue chain is MDQGAMETLPEKPSEDEFSLALRNGLILCNVLNKVNPGSVLKVVENPITPAIQYADGAAQSAIQYFENMRNFLKAVEDMQLLTFGASDLEKGGSSNKVVDCILCLKGFYEWKQAGGVGVWRYGGTVRIVSFNRKGSSPPQYGIGSESTTDESVSLDESESSQYDQLLDFLHLSNEISAEESETAISLAFLFDHFALQLLHGYLKESDGINDMPLNEMVIDTLLNRVVKDFSAILVSQGAQLGSFLRKILKCDNGDLSRSEFLAAVFRYLQHRKDLVSKEFSKFCKCGGKLEFSRLNAREFSPGHVEAIGLQQKELEEVKSNFVETRSQVKQMQSEWQKELQRIVHHVKAMEVTSSSYHKVLEENRLLYNEVQDLKGTIRVYCRVRPFFQEQKDMQSTVDYIGENGNIIINNPFKQEKDARKIFSFNKVFGQTVSQEQIYIDTQPVIRSVLDGFNVCIFAYGQTGSGKTYTMSGPDLMTETTWGVNYRALRDLFQLSNARTHVVTYEIGVQMIEIYNEQVRDLLVSDGSSRRLDIRNNSQLNGLNVPDANLIPVSNTRDVLDLMRIGQKNRAVGATALNERSSRSHSVLTVHVQGKELASGSILRGCLHLVDLAGSERVEKSEAVGERLKEAQHINKSLSALGDVIYALAQKSSHVPYRNSKLTQVLQDSLGGQAKTLMFVHINPEVNAVGETISTLKFAQRVASIELGAARSNKETGEIRDLKDEISSLKSAMEKKEAELEQLRSGSIRNTTECQRARAVSPFHLPRTGNGAGTKAEASPQPNDGTRSYETRSCSTGKQRKSGFPSALRNREASPRMPNLAEERLNPSPSRRSLSTDRASTIKSRNKPDVTQNLPVSRTPFPARVPVVKSFSTVPLNPSAENNHRLHTDNSSEAFQNHQKLSARKLFPEIEEEHIRHALHIRQGGVKKTRAESSKAKAKQPSPARFQKLDVGISLRSDADSEAKVGNYQTQKGNNNHNVIHSRFQNFDVGISLFSDLCAGDKSDSTLKSDSSETDNEPPSKSKNAQRNSSKNSLNHKLRTIYAHEDTSLVDDKPSNGTAHIKEGNNNISMPEFRRSRSTHHARFMVP.

In terms of domain architecture, Calponin-homology (CH) spans 1–110 (MDQGAMETLP…CILCLKGFYE (110 aa)). Positions 136 to 155 (SSPPQYGIGSESTTDESVSL) are disordered. The 329-residue stretch at 377–705 (TIRVYCRVRP…LKFAQRVASI (329 aa)) folds into the Kinesin motor domain. 461–468 (GQTGSGKT) provides a ligand contact to ATP. Residues 710–749 (ARSNKETGEIRDLKDEISSLKSAMEKKEAELEQLRSGSIR) adopt a coiled-coil conformation. Disordered regions lie at residues 740–858 (LEQL…PVSR), 923–949 (QGGV…FQKL), and 1004–1087 (DSTL…FMVP). 3 stretches are compositionally biased toward polar residues: residues 744–754 (RSGSIRNTTEC), 780–797 (PQPN…CSTG), and 836–856 (TDRA…NLPV). Over residues 1017-1033 (EPPSKSKNAQRNSSKNS) the composition is skewed to polar residues. Over residues 1042–1054 (YAHEDTSLVDDKP) the composition is skewed to basic and acidic residues. Residues 1076-1087 (SRSTHHARFMVP) show a composition bias toward basic residues.

The protein belongs to the TRAFAC class myosin-kinesin ATPase superfamily. Kinesin family. KIN-14 subfamily. In terms of assembly, interacts (via C-terminus) with VDAC3. Expressed in roots, leaves, stems and flowers (at protein level).

The protein resides in the cytoplasm. The protein localises to the cytoskeleton. It localises to the mitochondrion. Required for keeping the ATP levels stable and balancing the aerobic respiration pathways during seed germination at low temperature. The sequence is that of Kinesin-like protein KIN-14F from Arabidopsis thaliana (Mouse-ear cress).